Consider the following 417-residue polypeptide: UDP-N-acetylglucosamine 1-carboxyvinyltransferase (417 aa).

Phosphoenolpyruvate is bound at residue 22-23 (KN). Arg-93 serves as a coordination point for UDP-N-acetyl-alpha-D-glucosamine. Catalysis depends on Cys-117, which acts as the Proton donor. Cys-117 is modified (2-(S-cysteinyl)pyruvic acid O-phosphothioketal). UDP-N-acetyl-alpha-D-glucosamine is bound by residues 122–126 (RPVDQ), Asp-305, and Ile-327.

The protein belongs to the EPSP synthase family. MurA subfamily.

It is found in the cytoplasm. The enzyme catalyses phosphoenolpyruvate + UDP-N-acetyl-alpha-D-glucosamine = UDP-N-acetyl-3-O-(1-carboxyvinyl)-alpha-D-glucosamine + phosphate. It participates in cell wall biogenesis; peptidoglycan biosynthesis. Its function is as follows. Cell wall formation. Adds enolpyruvyl to UDP-N-acetylglucosamine. The protein is UDP-N-acetylglucosamine 1-carboxyvinyltransferase of Nitrosomonas europaea (strain ATCC 19718 / CIP 103999 / KCTC 2705 / NBRC 14298).